The chain runs to 1273 residues: DNA-directed RNA polymerase subunit beta (1273 aa).

Positions 1252 to 1273 (ADDQDLVVSSNDEEVSENDERS) are disordered.

The protein belongs to the RNA polymerase beta chain family. As to quaternary structure, the RNAP catalytic core consists of 2 alpha, 1 beta, 1 beta' and 1 omega subunit. When a sigma factor is associated with the core the holoenzyme is formed, which can initiate transcription.

The enzyme catalyses RNA(n) + a ribonucleoside 5'-triphosphate = RNA(n+1) + diphosphate. DNA-dependent RNA polymerase catalyzes the transcription of DNA into RNA using the four ribonucleoside triphosphates as substrates. This is DNA-directed RNA polymerase subunit beta from Dehalococcoides mccartyi (strain ATCC BAA-2100 / JCM 16839 / KCTC 5957 / BAV1).